The chain runs to 240 residues: Phosphoribosylaminoimidazole-succinocarboxamide synthase (240 aa).

This sequence belongs to the SAICAR synthetase family.

The catalysed reaction is 5-amino-1-(5-phospho-D-ribosyl)imidazole-4-carboxylate + L-aspartate + ATP = (2S)-2-[5-amino-1-(5-phospho-beta-D-ribosyl)imidazole-4-carboxamido]succinate + ADP + phosphate + 2 H(+). It functions in the pathway purine metabolism; IMP biosynthesis via de novo pathway; 5-amino-1-(5-phospho-D-ribosyl)imidazole-4-carboxamide from 5-amino-1-(5-phospho-D-ribosyl)imidazole-4-carboxylate: step 1/2. The polypeptide is Phosphoribosylaminoimidazole-succinocarboxamide synthase (Anoxybacillus flavithermus (strain DSM 21510 / WK1)).